The primary structure comprises 407 residues: L-amino-acid oxidase (407 aa).

An intrachain disulfide couples Cys-10 to Cys-94. N-linked (GlcNAc...) asparagine glycosylation occurs at Asn-93. A substrate-binding site is contributed by His-144. Val-182 is a binding site for FAD. The cysteines at positions 252 and 333 are disulfide-linked. The N-linked (GlcNAc...) asparagine glycan is linked to Asn-282. Tyr-293 provides a ligand contact to substrate. FAD contacts are provided by residues Glu-378 and 385–390 (GWIDST). 385–386 (GW) is a substrate binding site.

It belongs to the flavin monoamine oxidase family. FIG1 subfamily. As to quaternary structure, homodimer; non-covalently linked. The cofactor is FAD. In terms of tissue distribution, expressed by the venom gland.

Its subcellular location is the secreted. It carries out the reaction an L-alpha-amino acid + O2 + H2O = a 2-oxocarboxylate + H2O2 + NH4(+). The enzyme catalyses L-leucine + O2 + H2O = 4-methyl-2-oxopentanoate + H2O2 + NH4(+). It catalyses the reaction L-phenylalanine + O2 + H2O = 3-phenylpyruvate + H2O2 + NH4(+). The catalysed reaction is L-isoleucine + O2 + H2O = (S)-3-methyl-2-oxopentanoate + H2O2 + NH4(+). It carries out the reaction L-aspartate + O2 + H2O = oxaloacetate + H2O2 + NH4(+). The enzyme catalyses L-lysine + O2 + H2O = 6-amino-2-oxohexanoate + H2O2 + NH4(+). It catalyses the reaction L-glutamate + O2 + H2O = H2O2 + 2-oxoglutarate + NH4(+). Catalyzes an oxidative deamination of predominantly hydrophobic and aromatic L-amino acids, thus producing hydrogen peroxide that may contribute to the diverse toxic effects of this enzyme. Is highly active on L-Leu followed by L-Phe and L-Ile, moderately active on L-Asp, L-Glu, and L-Lys, and not active on L-Pro, L-Asn, L-Gly, L-Ser and L-Cys. Exhibits diverse biological activities such as antibacterial activity (Minimal inhibitory concentrations (MIC) are 9.0 ug/ml against S.aureus, 144.0 ug/ml against P.aeruginosa and 288.0 ug/ml against E.coli) and inhibition of ADP- and TMVA-induced platelet aggregation. Effects of snake L-amino oxidases on platelets are controversial, since they either induce aggregation or inhibit agonist-induced aggregation. These different effects are probably due to different experimental conditions. Unlike other snake venom L-amino acid oxidases, does not induce hemorrhage. This protein may also induce hemolysis, edema, apoptosis and have antiparasitic activities. In Daboia siamensis (Eastern Russel's viper), this protein is L-amino-acid oxidase.